A 349-amino-acid polypeptide reads, in one-letter code: Nicotinate-nucleotide--dimethylbenzimidazole phosphoribosyltransferase (349 aa).

Residue E316 is the Proton acceptor of the active site.

It belongs to the CobT family.

It carries out the reaction 5,6-dimethylbenzimidazole + nicotinate beta-D-ribonucleotide = alpha-ribazole 5'-phosphate + nicotinate + H(+). It participates in nucleoside biosynthesis; alpha-ribazole biosynthesis; alpha-ribazole from 5,6-dimethylbenzimidazole: step 1/2. Catalyzes the synthesis of alpha-ribazole-5'-phosphate from nicotinate mononucleotide (NAMN) and 5,6-dimethylbenzimidazole (DMB). This is Nicotinate-nucleotide--dimethylbenzimidazole phosphoribosyltransferase from Photorhabdus laumondii subsp. laumondii (strain DSM 15139 / CIP 105565 / TT01) (Photorhabdus luminescens subsp. laumondii).